A 231-amino-acid chain; its full sequence is Non-fluorescent flavoprotein (231 aa).

Belongs to the bacterial luciferase oxidoreductase family. Homodimer. FMN serves as cofactor.

This is Non-fluorescent flavoprotein (luxF) from Photobacterium phosphoreum.